The primary structure comprises 507 residues: ATP synthase subunit alpha, chloroplastic (507 aa).

170–177 (GDRQTGKT) provides a ligand contact to ATP.

Belongs to the ATPase alpha/beta chains family. F-type ATPases have 2 components, CF(1) - the catalytic core - and CF(0) - the membrane proton channel. CF(1) has five subunits: alpha(3), beta(3), gamma(1), delta(1), epsilon(1). CF(0) has four main subunits: a, b, b' and c.

The protein localises to the plastid. It localises to the chloroplast thylakoid membrane. It carries out the reaction ATP + H2O + 4 H(+)(in) = ADP + phosphate + 5 H(+)(out). Its function is as follows. Produces ATP from ADP in the presence of a proton gradient across the membrane. The alpha chain is a regulatory subunit. In Chloranthus spicatus (Chulantree), this protein is ATP synthase subunit alpha, chloroplastic.